A 935-amino-acid polypeptide reads, in one-letter code: Isoleucine--tRNA ligase (935 aa).

The short motif at 58-68 (PYANGSIHVGH) is the 'HIGH' region element. Residue Glu558 participates in L-isoleucyl-5'-AMP binding. A 'KMSKS' region motif is present at residues 599–603 (KMSKS). ATP is bound at residue Lys602. The Zn(2+) site is built by Cys897, Cys900, Cys917, and Cys920.

This sequence belongs to the class-I aminoacyl-tRNA synthetase family. IleS type 1 subfamily. In terms of assembly, monomer. Requires Zn(2+) as cofactor.

The protein localises to the cytoplasm. It carries out the reaction tRNA(Ile) + L-isoleucine + ATP = L-isoleucyl-tRNA(Ile) + AMP + diphosphate. Catalyzes the attachment of isoleucine to tRNA(Ile). As IleRS can inadvertently accommodate and process structurally similar amino acids such as valine, to avoid such errors it has two additional distinct tRNA(Ile)-dependent editing activities. One activity is designated as 'pretransfer' editing and involves the hydrolysis of activated Val-AMP. The other activity is designated 'posttransfer' editing and involves deacylation of mischarged Val-tRNA(Ile). This Francisella tularensis subsp. tularensis (strain SCHU S4 / Schu 4) protein is Isoleucine--tRNA ligase.